We begin with the raw amino-acid sequence, 225 residues long: Agamous-like MADS-box protein TM6 (225 aa).

The 61-residue stretch at 1–61 (MGRGKIEIKR…GKFHEYTSPT (61 aa)) folds into the MADS-box domain. Residues 84-174 (YERMQENLRK…LLNFEAKCDD (91 aa)) enclose the K-box domain.

As to expression, expressed during flower development in stamens, petals and carpels. Expressed in fruits and seeds.

It localises to the nucleus. Functionally, probable transcription factor involved in flower development. This chain is Agamous-like MADS-box protein TM6, found in Vitis vinifera (Grape).